The chain runs to 284 residues: N-methyltransferase sirN (284 aa).

It belongs to the methyltransferase superfamily. LaeA methyltransferase family.

It functions in the pathway mycotoxin biosynthesis. Functionally, N-methyltransferase; part of the gene cluster that mediates the biosynthesis of sirodesmin PL, an epipolythiodioxopiperazine (ETP) characterized by a disulfide bridged cyclic dipeptide and that acts as a phytotoxin which is involved in the blackleg didease of canola. SirD catalyzes the O-prenylation of L-tyrosine (L-Tyr) in the presence of dimethylallyl diphosphate (DMAPP) to yield 4-O-dimethylallyl-L-Tyr, and therefore represents probably the first pathway-specific enzyme in the biosynthesis of sirodesmin PL. 4-O-dimethylallyl-L-Tyr, then undergoes condensation with L-Ser in a reaction catalyzed by the non-ribosomal peptide synthase sirP to form the diketopiperazine (DKP) backbone. Further bishydroxylation of the DKP performed by the cytochrome P450 monooxygenase sirC leads to the production of the intermediate phomamide. This step is essential to form the reactive thiol group required for toxicity of sirodesmin PL. The next steps of sirodesmin biosynthesis are not well understood yet but some predictions could be made from intermediate compounds identification. Phomamide is converted into phomalizarine via oxidation, probably by sirT. Further oxidation, methylation (by sirM or sirN) and reduction steps convert phomalizarine to deacetyl sirodesmin. Finally, acetyltransferase sirH probably acetylates deacetyl sirodesmin to produce sirodesmin PL. This is N-methyltransferase sirN from Leptosphaeria maculans (Blackleg fungus).